The chain runs to 393 residues: NAD(P)H-quinone oxidoreductase subunit H, chloroplastic (393 aa).

It belongs to the complex I 49 kDa subunit family. NDH is composed of at least 16 different subunits, 5 of which are encoded in the nucleus.

The protein resides in the plastid. Its subcellular location is the chloroplast thylakoid membrane. It catalyses the reaction a plastoquinone + NADH + (n+1) H(+)(in) = a plastoquinol + NAD(+) + n H(+)(out). The catalysed reaction is a plastoquinone + NADPH + (n+1) H(+)(in) = a plastoquinol + NADP(+) + n H(+)(out). Its function is as follows. NDH shuttles electrons from NAD(P)H:plastoquinone, via FMN and iron-sulfur (Fe-S) centers, to quinones in the photosynthetic chain and possibly in a chloroplast respiratory chain. The immediate electron acceptor for the enzyme in this species is believed to be plastoquinone. Couples the redox reaction to proton translocation, and thus conserves the redox energy in a proton gradient. In Platanus occidentalis (Sycamore), this protein is NAD(P)H-quinone oxidoreductase subunit H, chloroplastic.